A 152-amino-acid chain; its full sequence is Endoribonuclease YbeY (152 aa).

Residues histidine 113, histidine 117, and histidine 123 each coordinate Zn(2+).

Belongs to the endoribonuclease YbeY family. Requires Zn(2+) as cofactor.

The protein resides in the cytoplasm. Functionally, single strand-specific metallo-endoribonuclease involved in late-stage 70S ribosome quality control and in maturation of the 3' terminus of the 16S rRNA. The sequence is that of Endoribonuclease YbeY from Wolbachia pipientis subsp. Culex pipiens (strain wPip).